The primary structure comprises 307 residues: Dihydroorotate dehydrogenase A (fumarate) (307 aa).

Residues serine 21 and lysine 46 to threonine 47 each bind FMN. Residues lysine 46, asparagine 70–leucine 74, and asparagine 130 contribute to the substrate site. Asparagine 130 provides a ligand contact to FMN. Cysteine 133 functions as the Nucleophile in the catalytic mechanism. Residues lysine 168 and isoleucine 194 each contribute to the FMN site. Asparagine 195–threonine 196 is a substrate binding site. FMN is bound by residues glycine 220, glycine 246–glycine 247, and glycine 268–serine 269.

The protein belongs to the dihydroorotate dehydrogenase family. Type 1 subfamily. Homodimer. Requires FMN as cofactor.

It localises to the cytoplasm. It carries out the reaction (S)-dihydroorotate + fumarate = orotate + succinate. It participates in pyrimidine metabolism; UMP biosynthesis via de novo pathway. Its function is as follows. Catalyzes the conversion of dihydroorotate to orotate with fumarate as the electron acceptor. This chain is Dihydroorotate dehydrogenase A (fumarate) (pyrD), found in Lactobacillus delbrueckii subsp. bulgaricus (strain ATCC 11842 / DSM 20081 / BCRC 10696 / JCM 1002 / NBRC 13953 / NCIMB 11778 / NCTC 12712 / WDCM 00102 / Lb 14).